The primary structure comprises 287 residues: Merozoite surface protein 2 (287 aa).

Residues 1 to 20 form the signal peptide; it reads MKVIKTLSIINFFIFVTFNI. Residues asparagine 22 and asparagine 36 are each glycosylated (N-linked (GlcNAc...) asparagine). Positions 42–248 are disordered; sequence SMTESNPPTG…DSQKECTDGN (207 aa). The interval 44–213 is polymorphic region; sequence TESNPPTGAS…EQTESPELQS (170 aa). Gly residues predominate over residues 54–112; the sequence is GSAGGSAGGSAGGSAGGSAGGSAGGSAGGSAGGSAGGSAGGSAGGSAGGSAGSGDGNGA. A run of 12 repeats spans residues 55 to 58, 59 to 62, 63 to 66, 67 to 70, 71 to 74, 75 to 78, 79 to 82, 83 to 86, 87 to 90, 91 to 94, 95 to 98, and 99 to 102. The interval 55–102 is 12 X 4 AA tandem repeats of S-A-G-G; it reads SAGGSAGGSAGGSAGGSAGGSAGGSAGGSAGGSAGGSAGGSAGGSAGG. The span at 121 to 149 shows a compositional bias: low complexity; that stretch reads SPSTPATTTTTTTTNDAEASTSTSSENPN. 2 stretches are compositionally biased toward polar residues: residues 150–180 and 187–215; these read HNNA…NVPP and KSPT…QSAP. The N-linked (GlcNAc...) asparagine glycan is linked to asparagine 164. Asparagine 236 is a glycosylation site (N-linked (GlcNAc...) asparagine). Cysteine 244 and cysteine 252 are disulfide-bonded. N-linked (GlcNAc...) asparagine glycosylation is found at asparagine 260 and asparagine 261. A lipid anchor (GPI-anchor amidated asparagine) is attached at asparagine 261. Residues 262–287 constitute a propeptide, removed in mature form; that stretch reads SSNIASINKFVVLISATLVLSFAIFI.

It localises to the cell membrane. May play a role in the merozoite attachment to the erythrocyte. The protein is Merozoite surface protein 2 of Plasmodium falciparum (isolate FCR-3 / Gambia).